We begin with the raw amino-acid sequence, 121 residues long: Small ribosomal subunit protein uS13 (121 aa).

The tract at residues 93–121 is disordered; the sequence is KGLPLRGQKTKTNARTRKGPKKTIANKKK.

This sequence belongs to the universal ribosomal protein uS13 family. As to quaternary structure, part of the 30S ribosomal subunit. Forms a loose heterodimer with protein S19. Forms two bridges to the 50S subunit in the 70S ribosome.

In terms of biological role, located at the top of the head of the 30S subunit, it contacts several helices of the 16S rRNA. In the 70S ribosome it contacts the 23S rRNA (bridge B1a) and protein L5 of the 50S subunit (bridge B1b), connecting the 2 subunits; these bridges are implicated in subunit movement. Contacts the tRNAs in the A and P-sites. The chain is Small ribosomal subunit protein uS13 from Clostridium perfringens (strain ATCC 13124 / DSM 756 / JCM 1290 / NCIMB 6125 / NCTC 8237 / Type A).